The chain runs to 188 residues: Pyridoxal 5'-phosphate synthase subunit PdxT (188 aa).

47–49 contributes to the L-glutamine binding site; the sequence is GES. C79 serves as the catalytic Nucleophile. L-glutamine contacts are provided by residues R105 and 134–135; that span reads IR. Catalysis depends on charge relay system residues H170 and E172.

Belongs to the glutaminase PdxT/SNO family. As to quaternary structure, in the presence of PdxS, forms a dodecamer of heterodimers. Only shows activity in the heterodimer.

The catalysed reaction is aldehydo-D-ribose 5-phosphate + D-glyceraldehyde 3-phosphate + L-glutamine = pyridoxal 5'-phosphate + L-glutamate + phosphate + 3 H2O + H(+). The enzyme catalyses L-glutamine + H2O = L-glutamate + NH4(+). It functions in the pathway cofactor biosynthesis; pyridoxal 5'-phosphate biosynthesis. In terms of biological role, catalyzes the hydrolysis of glutamine to glutamate and ammonia as part of the biosynthesis of pyridoxal 5'-phosphate. The resulting ammonia molecule is channeled to the active site of PdxS. The sequence is that of Pyridoxal 5'-phosphate synthase subunit PdxT from Listeria monocytogenes serotype 4b (strain F2365).